The chain runs to 381 residues: S-adenosylmethionine synthase (381 aa).

H15 serves as a coordination point for ATP. D17 lines the Mg(2+) pocket. A K(+)-binding site is contributed by E43. E56 and Q99 together coordinate L-methionine. Positions Q99–R109 are flexible loop. Residues D164 to K166, R230 to F231, D239, R245 to K246, A262, and K266 contribute to the ATP site. D239 provides a ligand contact to L-methionine. K270 is an L-methionine binding site.

The protein belongs to the AdoMet synthase family. Homotetramer; dimer of dimers. Requires Mg(2+) as cofactor. K(+) is required as a cofactor.

The protein localises to the cytoplasm. It carries out the reaction L-methionine + ATP + H2O = S-adenosyl-L-methionine + phosphate + diphosphate. It functions in the pathway amino-acid biosynthesis; S-adenosyl-L-methionine biosynthesis; S-adenosyl-L-methionine from L-methionine: step 1/1. Its function is as follows. Catalyzes the formation of S-adenosylmethionine (AdoMet) from methionine and ATP. The overall synthetic reaction is composed of two sequential steps, AdoMet formation and the subsequent tripolyphosphate hydrolysis which occurs prior to release of AdoMet from the enzyme. This chain is S-adenosylmethionine synthase, found in Alteromonas mediterranea (strain DSM 17117 / CIP 110805 / LMG 28347 / Deep ecotype).